The chain runs to 191 residues: Protein GrpE (191 aa).

It belongs to the GrpE family. Homodimer.

It localises to the cytoplasm. Its function is as follows. Participates actively in the response to hyperosmotic and heat shock by preventing the aggregation of stress-denatured proteins, in association with DnaK and GrpE. It is the nucleotide exchange factor for DnaK and may function as a thermosensor. Unfolded proteins bind initially to DnaJ; upon interaction with the DnaJ-bound protein, DnaK hydrolyzes its bound ATP, resulting in the formation of a stable complex. GrpE releases ADP from DnaK; ATP binding to DnaK triggers the release of the substrate protein, thus completing the reaction cycle. Several rounds of ATP-dependent interactions between DnaJ, DnaK and GrpE are required for fully efficient folding. This Listeria welshimeri serovar 6b (strain ATCC 35897 / DSM 20650 / CCUG 15529 / CIP 8149 / NCTC 11857 / SLCC 5334 / V8) protein is Protein GrpE.